The chain runs to 671 residues: ATP-dependent zinc metalloprotease FtsH (671 aa).

Residues 1-22 (MANPNNNNDNKQNNNNNFFNDN) are Cytoplasmic-facing. A helical transmembrane segment spans residues 23-43 (PLLAFAIFSIVIILIFKSFVG). Over 44–130 (EGESLGTMMN…ISYEGVVGNG (87 aa)) the chain is Periplasmic. Residues 131–151 (FFSELISMMLPILIFFAIWIF) traverse the membrane as a helical segment. At 152 to 671 (LAKKMSKGMG…SEESDNNKEA (520 aa)) the chain is on the cytoplasmic side. 224-231 (GPPGTGKT) serves as a coordination point for ATP. His447 is a Zn(2+) binding site. Residue Glu448 is part of the active site. Zn(2+)-binding residues include His451 and Asp525. The segment at 630–671 (EKGMPSRLAHKDKVAKNKAEADKKEEALKKEISEESDNNKEA) is disordered.

In the central section; belongs to the AAA ATPase family. The protein in the C-terminal section; belongs to the peptidase M41 family. Homohexamer. Requires Zn(2+) as cofactor.

The protein resides in the cell inner membrane. Functionally, acts as a processive, ATP-dependent zinc metallopeptidase for both cytoplasmic and membrane proteins. Plays a role in the quality control of integral membrane proteins. In Sulfurovum sp. (strain NBC37-1), this protein is ATP-dependent zinc metalloprotease FtsH.